Reading from the N-terminus, the 529-residue chain is Intraflagellar transport protein 56 (529 aa).

Positions 1–21 (MLHNRMTTAFERSKEQEHEAA) are disordered. Over residues 11–21 (ERSKEQEHEAA) the composition is skewed to basic and acidic residues. TPR repeat units follow at residues 57–90 (GNADLWIAYCNFHLGRHEEALEIYTALKKSKNPP), 154–187 (SADQMALAAVHFLRTHYQQALECYEEVLQVQPEC), 189–221 (AIYMHMALCYYKLGDYLKSEEFLMLYRENAEDS), 285–321 (SEARQNLVKLYIEKGQYEDAYKVVQSFEPAVSAEYTL), 359–392 (VLGRRAMAAAYFLTGEFEEASMYLESIADIPKES), and 428–461 (PVHRTWLGRLLIRAQRSAEAFDLYRDAEKNSLQT).

This sequence belongs to the IFT56 family.

The protein localises to the cell projection. It localises to the cilium. It is found in the flagellum. Its subcellular location is the cytoplasm. The protein resides in the cytoskeleton. The protein localises to the flagellum axoneme. It localises to the flagellum basal body. Functionally, component of the intraflagellar transport complex B (IFT-B) involved in flagellar assembly. This chain is Intraflagellar transport protein 56, found in Giardia intestinalis (strain ATCC 50803 / WB clone C6) (Giardia lamblia).